A 309-amino-acid chain; its full sequence is Elongation factor Ts (309 aa).

Positions 82–85 (TDFV) are involved in Mg(2+) ion dislocation from EF-Tu.

This sequence belongs to the EF-Ts family.

It is found in the cytoplasm. Functionally, associates with the EF-Tu.GDP complex and induces the exchange of GDP to GTP. It remains bound to the aminoacyl-tRNA.EF-Tu.GTP complex up to the GTP hydrolysis stage on the ribosome. The polypeptide is Elongation factor Ts (Rickettsia rickettsii (strain Iowa)).